The sequence spans 210 residues: Holliday junction branch migration complex subunit RuvA (210 aa).

The domain I stretch occupies residues 1 to 70 (MISYLKGNPI…DEQPILYGFA (70 aa)). The interval 71 to 149 (TAAERELFRQ…QWRKLVGITL (79 aa)) is domain II. A flexible linker region spans residues 150 to 160 (PSTSAIPSLEV). Positions 160 to 210 (VLEDVEMTLLALGYTNEEINKAISTLSQDNQMLKNTNSEEWIREAIAWLSQ) are domain III.

This sequence belongs to the RuvA family. As to quaternary structure, homotetramer. Forms an RuvA(8)-RuvB(12)-Holliday junction (HJ) complex. HJ DNA is sandwiched between 2 RuvA tetramers; dsDNA enters through RuvA and exits via RuvB. An RuvB hexamer assembles on each DNA strand where it exits the tetramer. Each RuvB hexamer is contacted by two RuvA subunits (via domain III) on 2 adjacent RuvB subunits; this complex drives branch migration. In the full resolvosome a probable DNA-RuvA(4)-RuvB(12)-RuvC(2) complex forms which resolves the HJ.

The protein resides in the cytoplasm. Functionally, the RuvA-RuvB-RuvC complex processes Holliday junction (HJ) DNA during genetic recombination and DNA repair, while the RuvA-RuvB complex plays an important role in the rescue of blocked DNA replication forks via replication fork reversal (RFR). RuvA specifically binds to HJ cruciform DNA, conferring on it an open structure. The RuvB hexamer acts as an ATP-dependent pump, pulling dsDNA into and through the RuvAB complex. HJ branch migration allows RuvC to scan DNA until it finds its consensus sequence, where it cleaves and resolves the cruciform DNA. The polypeptide is Holliday junction branch migration complex subunit RuvA (Rippkaea orientalis (strain PCC 8801 / RF-1) (Cyanothece sp. (strain PCC 8801))).